A 292-amino-acid chain; its full sequence is MKIYVVATIAWILLQFSAWTTTDAVTSITLDLVNPTAGQYSSFVDKIRNNVKDPNLKYGGTDIAVIGPPSKDKFLRINFQSSRGTVSLGLKRDNLYVVAYLAMDNTNVNRAYYFKSEITSAELTALFPEATTANQKALEYTEDYQSIEKNAQITQGDKSRKELGLGIDLLLTFMEAVNKKARVVKNEARFLLIAIQMTAEVARFRYIQNLVTKNFPNKFDSDNKVIQFEVSWRKISTAIYGDAKNGVFNKDYDFGFGKVRQVKDLQMGLLMYLGKPKSSNEANSTAYATTVL.

A signal peptide spans 1–24 (MKIYVVATIAWILLQFSAWTTTDA). Glu200 is an active-site residue.

Belongs to the ribosome-inactivating protein family. Type 1 RIP subfamily.

The catalysed reaction is Endohydrolysis of the N-glycosidic bond at one specific adenosine on the 28S rRNA.. In terms of biological role, ribosome-inactivating protein of type 1, inhibits protein synthesis in animal cells. Useful as immunotoxin for pharmacological applications. The chain is Ribosome-inactivating protein saporin-2 (SAP2) from Saponaria officinalis (Common soapwort).